The chain runs to 352 residues: N-acetyl-gamma-glutamyl-phosphate reductase (352 aa).

Residue Cys-155 is part of the active site.

The protein belongs to the NAGSA dehydrogenase family. Type 1 subfamily.

It localises to the cytoplasm. The catalysed reaction is N-acetyl-L-glutamate 5-semialdehyde + phosphate + NADP(+) = N-acetyl-L-glutamyl 5-phosphate + NADPH + H(+). It functions in the pathway amino-acid biosynthesis; L-arginine biosynthesis; N(2)-acetyl-L-ornithine from L-glutamate: step 3/4. Its function is as follows. Catalyzes the NADPH-dependent reduction of N-acetyl-5-glutamyl phosphate to yield N-acetyl-L-glutamate 5-semialdehyde. The polypeptide is N-acetyl-gamma-glutamyl-phosphate reductase (Acaryochloris marina (strain MBIC 11017)).